The following is a 157-amino-acid chain: Dihydrofolate reductase type 6 (157 aa).

The 155-residue stretch at 2–156 folds into the DHFR domain; sequence KISLMAAVSE…IDYTYQIWAK (155 aa).

It belongs to the dihydrofolate reductase family. As to quaternary structure, homodimer.

It catalyses the reaction (6S)-5,6,7,8-tetrahydrofolate + NADP(+) = 7,8-dihydrofolate + NADPH + H(+). It participates in cofactor biosynthesis; tetrahydrofolate biosynthesis; 5,6,7,8-tetrahydrofolate from 7,8-dihydrofolate: step 1/1. Its function is as follows. Key enzyme in folate metabolism. Catalyzes an essential reaction for de novo glycine and purine synthesis, and for DNA precursor synthesis. The chain is Dihydrofolate reductase type 6 (dhfrVI) from Proteus mirabilis.